A 1128-amino-acid polypeptide reads, in one-letter code: Zinc finger protein 654 (1128 aa).

The disordered stretch occupies residues 498-523 (GFDSLTDQSTGETDPDDVSGVQPKGH). 5 consecutive C2H2-type zinc fingers follow at residues 572–594 (FACV…LKNH), 746–771 (FKCP…MTVH), 787–809 (GKCK…LNRH), 815–839 (YFCL…TKSH), and 844–868 (AQCS…EAQH). Residues 891–951 (DSNPNQEKDS…GNERSDDTVS (61 aa)) are disordered. Composition is skewed to polar residues over residues 903-915 (NEKQ…VSTS) and 937-951 (SLVQ…DTVS). 2 positions are modified to phosphoserine: S1123 and S1127.

It belongs to the krueppel C2H2-type zinc-finger protein family.

The protein resides in the nucleus. Its function is as follows. May be involved in transcriptional regulation. The polypeptide is Zinc finger protein 654 (Homo sapiens (Human)).